A 426-amino-acid chain; its full sequence is Cell adhesion molecule CEACAM16 (426 aa).

Residues M1–A22 form the signal peptide. N38 carries an N-linked (GlcNAc...) asparagine glycan. The interval E77 to D96 is disordered. Over residues T84–L95 the composition is skewed to basic and acidic residues. Ig-like C2-type domains are found at residues P134–T219 and P224–V310. An intrachain disulfide couples C155 to C202. The N-linked (GlcNAc...) asparagine glycan is linked to N217. A disulfide bond links C253 and C294.

Belongs to the immunoglobulin superfamily. CEA family. As to quaternary structure, homooligomer; can for homodimers and homotetramers. Interacts with TECTA and TECTB. In terms of tissue distribution, expressed in cochlear outer hair cells (OHC).

The protein localises to the secreted. Required for proper hearing, plays a role in maintaining the integrity of the tectorial membrane. The chain is Cell adhesion molecule CEACAM16 from Mus musculus (Mouse).